Here is a 98-residue protein sequence, read N- to C-terminus: Keratin-associated protein 3-3 (98 aa).

Ala-2 is subject to N-acetylalanine. Repeat copies occupy residues 3-7 (CCAPL), 8-12 (CCSAR), and 47-51 (CCDNC). The 3 X 5 AA repeats of C-C-X(3) stretch occupies residues 3–59 (CCAPLCCSARTSPATTICSSDKFCRCGVCLPSTCPHTVWLLEPTCCDNCPPPCHIPQ).

This sequence belongs to the KRTAP type 3 family. In terms of assembly, interacts with hair keratins.

In terms of biological role, in the hair cortex, hair keratin intermediate filaments are embedded in an interfilamentous matrix, consisting of hair keratin-associated proteins (KRTAP), which are essential for the formation of a rigid and resistant hair shaft through their extensive disulfide bond cross-linking with abundant cysteine residues of hair keratins. The matrix proteins include the high-sulfur and high-glycine-tyrosine keratins. The sequence is that of Keratin-associated protein 3-3 from Bos taurus (Bovine).